A 319-amino-acid chain; its full sequence is Acetyl-coenzyme A carboxylase carboxyl transferase subunit alpha (319 aa).

The CoA carboxyltransferase C-terminal domain occupies 35–296 (NIDEEVHRLR…KAQLLADLAD (262 aa)).

This sequence belongs to the AccA family. Acetyl-CoA carboxylase is a heterohexamer composed of biotin carboxyl carrier protein (AccB), biotin carboxylase (AccC) and two subunits each of ACCase subunit alpha (AccA) and ACCase subunit beta (AccD).

It is found in the cytoplasm. The enzyme catalyses N(6)-carboxybiotinyl-L-lysyl-[protein] + acetyl-CoA = N(6)-biotinyl-L-lysyl-[protein] + malonyl-CoA. The protein operates within lipid metabolism; malonyl-CoA biosynthesis; malonyl-CoA from acetyl-CoA: step 1/1. Functionally, component of the acetyl coenzyme A carboxylase (ACC) complex. First, biotin carboxylase catalyzes the carboxylation of biotin on its carrier protein (BCCP) and then the CO(2) group is transferred by the carboxyltransferase to acetyl-CoA to form malonyl-CoA. This chain is Acetyl-coenzyme A carboxylase carboxyl transferase subunit alpha, found in Klebsiella pneumoniae subsp. pneumoniae (strain ATCC 700721 / MGH 78578).